A 336-amino-acid chain; its full sequence is Holliday junction branch migration complex subunit RuvB (336 aa).

Residues 1 to 182 form a large ATPase domain (RuvB-L) region; sequence MKERIVNLET…FGMSFRMQFY (182 aa). ATP-binding positions include leucine 21, arginine 22, glycine 63, lysine 66, threonine 67, serine 68, 129 to 131, arginine 172, tyrosine 182, and arginine 219; that span reads EDF. Threonine 67 contacts Mg(2+). Residues 183-253 are small ATPAse domain (RuvB-S); the sequence is SPSELSLIIK…ITLHALNELG (71 aa). The tract at residues 256–336 is head domain (RuvB-H); sequence ELGFDEADLA…IPTLNPQTLF (81 aa). DNA-binding residues include arginine 310 and arginine 315.

It belongs to the RuvB family. In terms of assembly, homohexamer. Forms an RuvA(8)-RuvB(12)-Holliday junction (HJ) complex. HJ DNA is sandwiched between 2 RuvA tetramers; dsDNA enters through RuvA and exits via RuvB. An RuvB hexamer assembles on each DNA strand where it exits the tetramer. Each RuvB hexamer is contacted by two RuvA subunits (via domain III) on 2 adjacent RuvB subunits; this complex drives branch migration. In the full resolvosome a probable DNA-RuvA(4)-RuvB(12)-RuvC(2) complex forms which resolves the HJ.

Its subcellular location is the cytoplasm. The enzyme catalyses ATP + H2O = ADP + phosphate + H(+). In terms of biological role, the RuvA-RuvB-RuvC complex processes Holliday junction (HJ) DNA during genetic recombination and DNA repair, while the RuvA-RuvB complex plays an important role in the rescue of blocked DNA replication forks via replication fork reversal (RFR). RuvA specifically binds to HJ cruciform DNA, conferring on it an open structure. The RuvB hexamer acts as an ATP-dependent pump, pulling dsDNA into and through the RuvAB complex. RuvB forms 2 homohexamers on either side of HJ DNA bound by 1 or 2 RuvA tetramers; 4 subunits per hexamer contact DNA at a time. Coordinated motions by a converter formed by DNA-disengaged RuvB subunits stimulates ATP hydrolysis and nucleotide exchange. Immobilization of the converter enables RuvB to convert the ATP-contained energy into a lever motion, pulling 2 nucleotides of DNA out of the RuvA tetramer per ATP hydrolyzed, thus driving DNA branch migration. The RuvB motors rotate together with the DNA substrate, which together with the progressing nucleotide cycle form the mechanistic basis for DNA recombination by continuous HJ branch migration. Branch migration allows RuvC to scan DNA until it finds its consensus sequence, where it cleaves and resolves cruciform DNA. This is Holliday junction branch migration complex subunit RuvB from Helicobacter pylori (strain P12).